Reading from the N-terminus, the 427-residue chain is Enolase (427 aa).

Q163 contacts (2R)-2-phosphoglycerate. E205 functions as the Proton donor in the catalytic mechanism. Residues D242, E285, and D312 each contribute to the Mg(2+) site. Positions 337, 366, 367, and 388 each coordinate (2R)-2-phosphoglycerate. The active-site Proton acceptor is the K337.

Belongs to the enolase family. It depends on Mg(2+) as a cofactor.

It localises to the cytoplasm. The protein resides in the secreted. The protein localises to the cell surface. The enzyme catalyses (2R)-2-phosphoglycerate = phosphoenolpyruvate + H2O. The protein operates within carbohydrate degradation; glycolysis; pyruvate from D-glyceraldehyde 3-phosphate: step 4/5. Its function is as follows. Catalyzes the reversible conversion of 2-phosphoglycerate (2-PG) into phosphoenolpyruvate (PEP). It is essential for the degradation of carbohydrates via glycolysis. The polypeptide is Enolase (Polaromonas sp. (strain JS666 / ATCC BAA-500)).